The sequence spans 346 residues: Protein phosphatase 1 regulatory subunit 7 (346 aa).

Residues 1–13 (MADEEGETEVQEM) are compositionally biased toward acidic residues. A disordered region spans residues 1–46 (MADEEGETEVQEMEVDRRESDESADDEAKEKPDRVDGGVKNGEVPL). Residues 14-37 (EVDRRESDESADDEAKEKPDRVDG) are compositionally biased toward basic and acidic residues. LRR repeat units lie at residues 63 to 84 (EAEDVDLNHFKIGKIQGFEVLK), 85 to 106 (KVKTLCLRQNLIKLIENLEQLV), 107 to 128 (TLTELDLYDNQIRKIGNLETLR), 129 to 150 (DLQILDLSFNLLRRIEGLESLS), 151 to 172 (HLQRLYLVNNKISRIENFGTLT), 173 to 194 (QLRLLELGSNRLRVIENLDSLR), 195 to 216 (ELDSLFLGKNKITKLQNLETLT), 217 to 238 (NLTVLSVQSNRLTKIEGLQNLV), 239 to 260 (NLRELYLSDNGIQVIEGLENNN), 261 to 282 (KLTTLDLASNRIKRIENIKHLS), and 283 to 304 (ELQEFWMNDNLVENWSDLEELS). In terms of domain architecture, LRRCT spans 317 to 346 (NPLQKDAQYRRKIMLALPSVRQIDATFVRF).

Belongs to the SDS22 family.

Its subcellular location is the nucleus. Regulatory subunit of protein phosphatase 1. The polypeptide is Protein phosphatase 1 regulatory subunit 7 (ppp1r7) (Xenopus tropicalis (Western clawed frog)).